The following is a 214-amino-acid chain: Non-structural protein NP-1 (214 aa).

2 disordered regions span residues 1 to 87 (MSSE…TNPY) and 192 to 214 (ESEE…NASN). Basic residues predominate over residues 33-43 (SRSRSPIRRHG). Positions 44–55 (EKNLEYAHHSNQ) are enriched in basic and acidic residues. Over residues 56–71 (ENRQSSYTALKTSDQA) the composition is skewed to polar residues. Acidic residues predominate over residues 192–201 (ESEEVTDEEM).

The protein belongs to the Bocaparvovirus Non-structural protein NP-1 family.

It localises to the host nucleus. Required for the expression of the capsid proteins. Performs the splicing and internal polyadenylation of the viral capsid-encoding mRNA precursor, which allows its maturation and expression. Transactivates the viral promoter. In Human bocavirus 2 (HBoV2), this protein is Non-structural protein NP-1 (NP1).